Here is a 223-residue protein sequence, read N- to C-terminus: Large ribosomal subunit protein bL21 (223 aa).

The segment at 110–149 (TALKSTTAEPKAADAPKAKAKAAPKAEKAAAPKAEKAPAK) is disordered. The segment covering 133–147 (PKAEKAAAPKAEKAP) has biased composition (basic and acidic residues).

The protein belongs to the bacterial ribosomal protein bL21 family. As to quaternary structure, part of the 50S ribosomal subunit. Contacts protein L20.

Functionally, this protein binds to 23S rRNA in the presence of protein L20. The polypeptide is Large ribosomal subunit protein bL21 (Maricaulis maris (strain MCS10) (Caulobacter maris)).